The chain runs to 162 residues: Peroxiredoxin-2D (162 aa).

The Thioredoxin domain occupies 4-162 (ITVGDVVPDG…SSAEDILKAL (159 aa)). Cys-51 serves as the catalytic Cysteine sulfenic acid (-SOH) intermediate.

Belongs to the peroxiredoxin family. Prx5 subfamily. As to quaternary structure, monomer. As to expression, exclusively expressed in buds and flowers. Also detected in pollen.

Its subcellular location is the cytoplasm. It carries out the reaction [glutaredoxin]-dithiol + a hydroperoxide = [glutaredoxin]-disulfide + an alcohol + H2O. In terms of biological role, thiol-specific peroxidase that catalyzes the reduction of hydrogen peroxide and organic hydroperoxides to water and alcohols, respectively. Plays a role in cell protection against oxidative stress by detoxifying peroxides. May be involved in intracellular redox signaling. The chain is Peroxiredoxin-2D (PRXIID) from Arabidopsis thaliana (Mouse-ear cress).